Reading from the N-terminus, the 360-residue chain is Chorismate synthase (360 aa).

2 residues coordinate NADP(+): Arg-48 and Arg-54. Residues 125 to 127, 242 to 243, Gly-283, 298 to 302, and Arg-324 contribute to the FMN site; these read RSS, NG, and KPTSS.

Belongs to the chorismate synthase family. As to quaternary structure, homotetramer. The cofactor is FMNH2.

The enzyme catalyses 5-O-(1-carboxyvinyl)-3-phosphoshikimate = chorismate + phosphate. It participates in metabolic intermediate biosynthesis; chorismate biosynthesis; chorismate from D-erythrose 4-phosphate and phosphoenolpyruvate: step 7/7. In terms of biological role, catalyzes the anti-1,4-elimination of the C-3 phosphate and the C-6 proR hydrogen from 5-enolpyruvylshikimate-3-phosphate (EPSP) to yield chorismate, which is the branch point compound that serves as the starting substrate for the three terminal pathways of aromatic amino acid biosynthesis. This reaction introduces a second double bond into the aromatic ring system. In Gluconobacter oxydans (strain 621H) (Gluconobacter suboxydans), this protein is Chorismate synthase.